The sequence spans 298 residues: GTPase Era (298 aa).

Residues lysine 3 to glutamate 170 form the Era-type G domain. Residues glycine 11 to serine 18 are G1. GTP is bound at residue glycine 11 to serine 18. Residues glutamine 37–asparagine 41 form a G2 region. Residues aspartate 58–glycine 61 are G3. GTP-binding positions include aspartate 58–isoleucine 62 and asparagine 120–aspartate 123. Positions asparagine 120–aspartate 123 are G4. A G5 region spans residues isoleucine 149–alanine 151. In terms of domain architecture, KH type-2 spans threonine 201–lysine 279.

The protein belongs to the TRAFAC class TrmE-Era-EngA-EngB-Septin-like GTPase superfamily. Era GTPase family. Monomer.

It is found in the cytoplasm. Its subcellular location is the cell membrane. In terms of biological role, an essential GTPase that binds both GDP and GTP, with rapid nucleotide exchange. Plays a role in 16S rRNA processing and 30S ribosomal subunit biogenesis and possibly also in cell cycle regulation and energy metabolism. The protein is GTPase Era of Streptococcus pyogenes serotype M4 (strain MGAS10750).